A 536-amino-acid chain; its full sequence is B3 domain-containing protein Os03g0619800 (536 aa).

The segment at residues M26–D119 is a DNA-binding region (TF-B3 1). Residues D138–D199 are disordered. Composition is skewed to low complexity over residues D145–S160 and S171–G183. Positions V231–E330 form a DNA-binding region, TF-B3 2. A disordered region spans residues R335–I396. Residues G344 to A355 show a composition bias toward polar residues. Residues S372 to L382 are compositionally biased toward basic and acidic residues. The TF-B3 3 DNA-binding region spans I429–L529.

It is found in the nucleus. The polypeptide is B3 domain-containing protein Os03g0619800 (Oryza sativa subsp. japonica (Rice)).